Consider the following 629-residue polypeptide: Probable potassium transport system protein Kup 3 (629 aa).

Transmembrane regions (helical) follow at residues 20–40 (LSLS…LYTF), 61–81 (VSLI…HFAL), 106–126 (PFII…GTIT), 143–163 (PSLK…LFAI), 171–191 (IGKA…ILGA), 209–229 (GLSF…GVFL), 253–273 (WFGL…ALVL), 291–311 (FLLP…QAII), 343–363 (IYIG…TIGF), 372–392 (AYGI…FIAL), 400–420 (IITS…FFAA), and 425–445 (FING…MMYI).

This sequence belongs to the HAK/KUP transporter (TC 2.A.72) family.

It localises to the cell inner membrane. The catalysed reaction is K(+)(in) + H(+)(in) = K(+)(out) + H(+)(out). Its function is as follows. Transport of potassium into the cell. Likely operates as a K(+):H(+) symporter. This Legionella pneumophila subsp. pneumophila (strain Philadelphia 1 / ATCC 33152 / DSM 7513) protein is Probable potassium transport system protein Kup 3.